A 698-amino-acid polypeptide reads, in one-letter code: Endogenous retrovirus group K member 21 Env polyprotein (698 aa).

The interval 1–25 (MHPSEMQRKAPPRRRRHRNRAPLTH) is disordered. The N-terminal stretch at 1–88 (MHPSEMQRKA…ALMIVSMVVS (88 aa)) is a signal peptide. Residues 10 to 20 (APPRRRRHRNR) are compositionally biased toward basic residues. The Extracellular portion of the chain corresponds to 89-631 (LPMPAGAAAA…NLNPVTWVKT (543 aa)). N-linked (GlcNAc...) asparagine glycosylation is found at asparagine 99, asparagine 127, asparagine 152, asparagine 273, asparagine 354, asparagine 371, and asparagine 460. The interval 465–485 (FIFTLIAVIMGLIAVTAMAAV) is fusion peptide. 4 N-linked (GlcNAc...) asparagine glycosylation sites follow: asparagine 506, asparagine 553, asparagine 565, and asparagine 584. The chain crosses the membrane as a helical span at residues 632 to 652 (IGSTTIINLILILVCLFCLLL). The Cytoplasmic portion of the chain corresponds to 653 to 698 (VCRCTQQLRRDSDHRERAMMTMVVLSKRKGGNVGKSKRDQIVTVSV).

The protein belongs to the beta type-B retroviral envelope protein family. HERV class-II K(HML-2) env subfamily. The surface (SU) and transmembrane (TM) proteins form a heterodimer. SU and TM are attached by noncovalent interactions or by a labile interchain disulfide bond. Specific enzymatic cleavages in vivo yield the mature SU and TM proteins.

Its subcellular location is the cell membrane. It is found in the virion. Functionally, retroviral envelope proteins mediate receptor recognition and membrane fusion during early infection. Endogenous envelope proteins may have kept, lost or modified their original function during evolution. This endogenous envelope protein has lost its original fusogenic properties. SU mediates receptor recognition. In terms of biological role, TM anchors the envelope heterodimer to the viral membrane through one transmembrane domain. The other hydrophobic domain, called fusion peptide, mediates fusion of the viral membrane with the target cell membrane. This chain is Endogenous retrovirus group K member 21 Env polyprotein (ERVK-21), found in Homo sapiens (Human).